The following is a 246-amino-acid chain: E3 ubiquitin-protein ligase MARCHF2 (246 aa).

The RING-CH-type zinc finger occupies 56–116 (DTPSDGPFCR…ELCHTEFAVE (61 aa)). The required for inhibition of HIV-1 virus production and VSV G protein expression stretch occupies residues 56-116 (DTPSDGPFCR…ELCHTEFAVE (61 aa)). The Zn(2+) site is built by Cys-64, Cys-67, Cys-80, Cys-82, His-90, Cys-93, Cys-106, and Cys-109. Residues 121-246 (PLTEWLKDPG…LKKVAEETPV (126 aa)) form a required for interaction with IKBKG region. Transmembrane regions (helical) follow at residues 138 to 158 (LCCD…SGWL) and 175 to 195 (AVGL…WTLV).

Interacts with STX6; the interaction promotes MARCHF2-mediated ubiquitination and degradation of CFTR. Interacts with MARCHF3. Interacts with GOPC/CAL; the interaction leads to CFTR ubiquitination and degradation. Interacts with CFTR; the interaction leads to CFTR ubiqtuitination and degradation. Interacts (via PDZ domain) with DLG1 (via PDZ domains); the interaction leads to DLG1 ubiqtuitination and degradation. Interacts with ERGIC3. Interacts with ADRB2. Interacts with IKBKG/NEMO; during the late stages of macrophage viral and bacterial infection; the interaction leads to ubiquitination and degradation of IKBKG/NEMO. As to expression, broadly expressed.

The protein resides in the endoplasmic reticulum membrane. Its subcellular location is the lysosome membrane. The protein localises to the endosome membrane. It is found in the golgi apparatus membrane. It localises to the cytoplasm. The protein resides in the cell membrane. The catalysed reaction is S-ubiquitinyl-[E2 ubiquitin-conjugating enzyme]-L-cysteine + [acceptor protein]-L-lysine = [E2 ubiquitin-conjugating enzyme]-L-cysteine + N(6)-ubiquitinyl-[acceptor protein]-L-lysine.. It participates in protein modification; protein ubiquitination. In terms of biological role, E3 ubiquitin-protein ligase that may mediate ubiquitination of TFRC and CD86, and promote their subsequent endocytosis and sorting to lysosomes via multivesicular bodies. E3 ubiquitin ligases accept ubiquitin from an E2 ubiquitin-conjugating enzyme in the form of a thioester and then directly transfer the ubiquitin to targeted substrates. Together with GOPC/CAL mediates the ubiquitination and lysosomal degradation of CFTR. Ubiquitinates and therefore mediates the degradation of DLG1. Regulates the intracellular trafficking and secretion of alpha1-antitrypsin/SERPINA1 and HP/haptoglobin via ubiquitination and degradation of the cargo receptor ERGIC3. Negatively regulates the antiviral and antibacterial immune response by repression of the NF-kB and type 1 IFN signaling pathways, via MARCHF2-mediated K48-linked polyubiquitination of IKBKG/NEMO, resulting in its proteasomal degradation. May be involved in endosomal trafficking through interaction with STX6. Functionally, (Microbial infection) Positively regulates the degradation of Vesicular stomatitis virus (VSV) G protein via the lysosomal degradation pathway. Represses HIV-1 viral production and may inhibit the translocation of HIV-1 env to the cell surface, resulting in decreased viral cell-cell transmission. This Homo sapiens (Human) protein is E3 ubiquitin-protein ligase MARCHF2.